The chain runs to 217 residues: Oxygen-insensitive NAD(P)H nitroreductase (217 aa).

An FMN-binding site is contributed by 10-14 (RYSTK). NAD(+) contacts are provided by Lys14, Thr41, Asn71, Lys74, and Arg107. Asn71 is a binding site for FMN. Residues 165–166 (EG) and 205–207 (KSR) each bind FMN.

This sequence belongs to the nitroreductase family. As to quaternary structure, homodimer. Requires FMN as cofactor.

Its function is as follows. Reduction of a variety of nitroaromatic compounds using NADH (and to lesser extent NADPH) as source of reducing equivalents; two electrons are transferred. Capable of reducing nitrofurazone. The sequence is that of Oxygen-insensitive NAD(P)H nitroreductase from Salmonella typhimurium (strain LT2 / SGSC1412 / ATCC 700720).